A 180-amino-acid chain; its full sequence is Magnetosome protein MamS (180 aa).

At 1–21 the chain is on the cytoplasmic side; the sequence is MDFRPDQVVARIRGAVEGALT. A helical membrane pass occupies residues 22–42; the sequence is AQSVLGIGGALVLILVVIALL. The Lumenal portion of the chain corresponds to 43 to 180; it reads PDRFTRGEGK…EGLALWMTVQ (138 aa).

It belongs to the magnetosome MamS family.

It localises to the magnetosome membrane. Functionally, may play a role in magnetite crystal growth and size. This is Magnetosome protein MamS from Magnetospirillum gryphiswaldense (strain DSM 6361 / JCM 21280 / NBRC 15271 / MSR-1).